The chain runs to 1454 residues: Coiled-coil domain-containing protein 18 (1454 aa).

A Phosphoserine modification is found at serine 45. Coiled coils occupy residues 107–138 (APVDQEIKSLREKLNKLRQQNACLVTQNHSLM), 170–402 (ILEE…ISQL), 438–464 (KLVISELRIKLAIKEAEIQKLHANLTA), and 508–1309 (TMNK…SGHE). Residues 828-851 (QKQRESSAEKLRKMEEKCESAAHE) form a disordered region. A Phosphoserine modification is found at serine 1355.

It localises to the cytoplasm. Its subcellular location is the cytoskeleton. The protein resides in the microtubule organizing center. The protein localises to the centrosome. It is found in the centriolar satellite. The sequence is that of Coiled-coil domain-containing protein 18 (CCDC18) from Homo sapiens (Human).